Reading from the N-terminus, the 291-residue chain is MEMO1 family protein PH1626 (291 aa).

The protein belongs to the MEMO1 family.

The protein is MEMO1 family protein PH1626 of Pyrococcus horikoshii (strain ATCC 700860 / DSM 12428 / JCM 9974 / NBRC 100139 / OT-3).